A 302-amino-acid polypeptide reads, in one-letter code: N-acetylmuramic acid 6-phosphate etherase (302 aa).

The SIS domain occupies 57–220 (VSEKLKNNGR…TTAVMIKLGK (164 aa)). Glutamate 85 (proton donor) is an active-site residue. Glutamate 116 is an active-site residue.

The protein belongs to the GCKR-like family. MurNAc-6-P etherase subfamily. In terms of assembly, homodimer.

It carries out the reaction N-acetyl-D-muramate 6-phosphate + H2O = N-acetyl-D-glucosamine 6-phosphate + (R)-lactate. It participates in amino-sugar metabolism; N-acetylmuramate degradation. Functionally, specifically catalyzes the cleavage of the D-lactyl ether substituent of MurNAc 6-phosphate, producing GlcNAc 6-phosphate and D-lactate. This chain is N-acetylmuramic acid 6-phosphate etherase, found in Clostridium acetobutylicum (strain ATCC 824 / DSM 792 / JCM 1419 / IAM 19013 / LMG 5710 / NBRC 13948 / NRRL B-527 / VKM B-1787 / 2291 / W).